Consider the following 328-residue polypeptide: Malate dehydrogenase (328 aa).

Position 12–18 (12–18 (GAAGQIA)) interacts with NAD(+). Substrate is bound by residues R93 and R99. NAD(+) contacts are provided by residues N106, Q113, and 130-132 (VGN). Positions 132 and 163 each coordinate substrate. H188 (proton acceptor) is an active-site residue.

It belongs to the LDH/MDH superfamily. MDH type 2 family.

It carries out the reaction (S)-malate + NAD(+) = oxaloacetate + NADH + H(+). In terms of biological role, catalyzes the reversible oxidation of malate to oxaloacetate. This is Malate dehydrogenase from Burkholderia ambifaria (strain ATCC BAA-244 / DSM 16087 / CCUG 44356 / LMG 19182 / AMMD) (Burkholderia cepacia (strain AMMD)).